We begin with the raw amino-acid sequence, 450 residues long: tRNA modification GTPase MnmE (450 aa).

Residues R23, E79, and K118 each coordinate (6S)-5-formyl-5,6,7,8-tetrahydrofolate. Residues G214 to G374 enclose the TrmE-type G domain. N224 contributes to the K(+) binding site. Residues N224 to S229, T243 to T249, and D268 to G271 contribute to the GTP site. A Mg(2+)-binding site is contributed by S228. T243, I245, and T248 together coordinate K(+). T249 lines the Mg(2+) pocket. Residue K450 participates in (6S)-5-formyl-5,6,7,8-tetrahydrofolate binding.

It belongs to the TRAFAC class TrmE-Era-EngA-EngB-Septin-like GTPase superfamily. TrmE GTPase family. In terms of assembly, homodimer. Heterotetramer of two MnmE and two MnmG subunits. K(+) is required as a cofactor.

It is found in the cytoplasm. Functionally, exhibits a very high intrinsic GTPase hydrolysis rate. Involved in the addition of a carboxymethylaminomethyl (cmnm) group at the wobble position (U34) of certain tRNAs, forming tRNA-cmnm(5)s(2)U34. This Francisella tularensis subsp. holarctica (strain OSU18) protein is tRNA modification GTPase MnmE.